We begin with the raw amino-acid sequence, 202 residues long: ADP-ribosylation factor-like protein 15 (202 aa).

Residues 39 to 46 (GLTGSGKT), 82 to 86 (ELGGA), and 142 to 145 (NHQD) contribute to the GTP site.

This sequence belongs to the small GTPase superfamily. Arf family.

This is ADP-ribosylation factor-like protein 15 (ARL15) from Bos taurus (Bovine).